A 241-amino-acid polypeptide reads, in one-letter code: Large ribosomal subunit protein uL3 (241 aa).

The segment at 140-168 (SHRSIGSTGGRQDPGKTFKNKKMPGHMGD) is disordered. Gln151 bears the N5-methylglutamine mark.

This sequence belongs to the universal ribosomal protein uL3 family. In terms of assembly, part of the 50S ribosomal subunit. Forms a cluster with proteins L14 and L19. Post-translationally, methylated by PrmB.

Its function is as follows. One of the primary rRNA binding proteins, it binds directly near the 3'-end of the 23S rRNA, where it nucleates assembly of the 50S subunit. The chain is Large ribosomal subunit protein uL3 from Azorhizobium caulinodans (strain ATCC 43989 / DSM 5975 / JCM 20966 / LMG 6465 / NBRC 14845 / NCIMB 13405 / ORS 571).